We begin with the raw amino-acid sequence, 404 residues long: Formate-dependent phosphoribosylglycinamide formyltransferase (404 aa).

N(1)-(5-phospho-beta-D-ribosyl)glycinamide is bound by residues 25 to 26 (EL) and Glu85. ATP contacts are provided by residues Arg118, Lys159, 164-169 (SSGKGQ), 199-202 (EGFI), and Glu207. Residues 123-318 (RLAAEELGLP…EFELHARAIL (196 aa)) form the ATP-grasp domain. The Mg(2+) site is built by Glu277 and Glu289. N(1)-(5-phospho-beta-D-ribosyl)glycinamide contacts are provided by residues Asp296, Lys365, and 372-373 (RR).

It belongs to the PurK/PurT family. In terms of assembly, homodimer.

It catalyses the reaction N(1)-(5-phospho-beta-D-ribosyl)glycinamide + formate + ATP = N(2)-formyl-N(1)-(5-phospho-beta-D-ribosyl)glycinamide + ADP + phosphate + H(+). The protein operates within purine metabolism; IMP biosynthesis via de novo pathway; N(2)-formyl-N(1)-(5-phospho-D-ribosyl)glycinamide from N(1)-(5-phospho-D-ribosyl)glycinamide (formate route): step 1/1. Involved in the de novo purine biosynthesis. Catalyzes the transfer of formate to 5-phospho-ribosyl-glycinamide (GAR), producing 5-phospho-ribosyl-N-formylglycinamide (FGAR). Formate is provided by PurU via hydrolysis of 10-formyl-tetrahydrofolate. This is Formate-dependent phosphoribosylglycinamide formyltransferase from Burkholderia mallei (strain NCTC 10247).